Reading from the N-terminus, the 469-residue chain is ATP synthase subunit beta (469 aa).

Gly155–Thr162 contributes to the ATP binding site.

This sequence belongs to the ATPase alpha/beta chains family. F-type ATPases have 2 components, CF(1) - the catalytic core - and CF(0) - the membrane proton channel. CF(1) has five subunits: alpha(3), beta(3), gamma(1), delta(1), epsilon(1). CF(0) has three main subunits: a(1), b(2) and c(9-12). The alpha and beta chains form an alternating ring which encloses part of the gamma chain. CF(1) is attached to CF(0) by a central stalk formed by the gamma and epsilon chains, while a peripheral stalk is formed by the delta and b chains.

It is found in the cell inner membrane. The catalysed reaction is ATP + H2O + 4 H(+)(in) = ADP + phosphate + 5 H(+)(out). In terms of biological role, produces ATP from ADP in the presence of a proton gradient across the membrane. The catalytic sites are hosted primarily by the beta subunits. This Syntrophobacter fumaroxidans (strain DSM 10017 / MPOB) protein is ATP synthase subunit beta.